Reading from the N-terminus, the 1057-residue chain is MPKRNDIKTILVIGSGPIIIGQAAEFDYAGTQACLALKEEGYRVILVNSNPATIMTDKEIADKVYIEPLTHDFIARIIRKEQPDALLPTLGGQTGLNMAIQLHESGVLQDNNVQLLGTELTSIQQAEDREMFRTLMNDLNVPVPESDIVNTVEQAFKFKEQVGYPLIVRPAFTMGGTGGGICHNDEELHEIVSNGLHYSPATQCLLEKSIAGFKEIEYEVMRDKNDNAIVVCNMENIDPVGIHTGDSIVVAPSQTLSDVEYQMLRDVSLKVIRALGIEGGCNVQLALDPHSFDYYIIEVNPRVSRSSALASKATGYPIAKLAAKIAVGLTLDEMLNPITGTSYAAFEPTLDYVISKIPRFPFDKFEKGERELGTQMKATGEVMAIGRTYEESLLKAIRSLEYGVHHLGLPNGESFDLDYIKERISHQDDERLFFIGEAIRRGTTLEEIHNMTQIDYFFLHKFQNIIDIEHQLKEHQGDLEYLKYAKDYGFSDKTIAHRFNMTEEEVYQLRMENDIKPVYKMVDTCAAEFESSTPYYYGTYETENESIVTDKEKILVLGSGPIRIGQGVEFDYATVHAVWAIQKAGYEAIIVNNNPETVSTDFSISDKLYFEPLTEEDVMNIINLEKPKGVVVQFGGQTAINLADKLAKHGVKILGTSLENLNRAEDRKEFEALLRKINVPQPQGKTATSPEEALANAAEIGYPVVVRPSYVLGGRAMEIVDNDKELENYMTQAVKASPEHPVLVDRYLTGKEIEVDAICDGETVIIPGIMEHIERAGVHSGDSIAVYPPQTLTEDELATLEDYTIKLAKGINIIGLINIQFVIAHDGVYVLEVNPRSSRTVPFLSKITDIPMAQLAMRAIIGEKLTDMGYQEGVQPYAEGVFVKAPVFSFNKLKNVDITLGPEMKSTGEVMGKDTTLEKALFKGLTGSGVEVKDHGTVLMTVSDKDKEEVVKLAQRLNEVGYKILATSGTANKLAEYDIPAEVVGKIGGENDLLTRIQNGDVQIVINTMTKGKEVERDGFQIRRTTVENGIPCLTSLDTANALTNVIESMTFTMRQM.

The carboxyphosphate synthetic domain stretch occupies residues 1-401 (MPKRNDIKTI…SLLKAIRSLE (401 aa)). ATP is bound by residues arginine 129, arginine 169, glycine 175, glycine 176, lysine 208, isoleucine 210, glutamate 215, glycine 241, isoleucine 242, histidine 243, glutamine 284, and glutamate 298. The ATP-grasp 1 domain occupies 133–327 (RTLMNDLNVP…IAKLAAKIAV (195 aa)). Glutamine 284, glutamate 298, and asparagine 300 together coordinate Mg(2+). Residues glutamine 284, glutamate 298, and asparagine 300 each coordinate Mn(2+). The tract at residues 402 to 546 (YGVHHLGLPN…YGTYETENES (145 aa)) is oligomerization domain. The tract at residues 547–929 (IVTDKEKILV…ALFKGLTGSG (383 aa)) is carbamoyl phosphate synthetic domain. Residues 671–861 (EALLRKINVP…MAQLAMRAII (191 aa)) form the ATP-grasp 2 domain. Residues arginine 707, arginine 746, leucine 748, glutamate 752, glycine 777, valine 778, histidine 779, serine 780, glutamine 820, and glutamate 832 each contribute to the ATP site. Mg(2+)-binding residues include glutamine 820, glutamate 832, and asparagine 834. Glutamine 820, glutamate 832, and asparagine 834 together coordinate Mn(2+). The MGS-like domain occupies 930–1057 (VEVKDHGTVL…ESMTFTMRQM (128 aa)). The segment at 930 to 1057 (VEVKDHGTVL…ESMTFTMRQM (128 aa)) is allosteric domain.

Belongs to the CarB family. As to quaternary structure, composed of two chains; the small (or glutamine) chain promotes the hydrolysis of glutamine to ammonia, which is used by the large (or ammonia) chain to synthesize carbamoyl phosphate. Tetramer of heterodimers (alpha,beta)4. Mg(2+) is required as a cofactor. It depends on Mn(2+) as a cofactor.

It carries out the reaction hydrogencarbonate + L-glutamine + 2 ATP + H2O = carbamoyl phosphate + L-glutamate + 2 ADP + phosphate + 2 H(+). The catalysed reaction is hydrogencarbonate + NH4(+) + 2 ATP = carbamoyl phosphate + 2 ADP + phosphate + 2 H(+). It functions in the pathway amino-acid biosynthesis; L-arginine biosynthesis; carbamoyl phosphate from bicarbonate: step 1/1. It participates in pyrimidine metabolism; UMP biosynthesis via de novo pathway; (S)-dihydroorotate from bicarbonate: step 1/3. Large subunit of the glutamine-dependent carbamoyl phosphate synthetase (CPSase). CPSase catalyzes the formation of carbamoyl phosphate from the ammonia moiety of glutamine, carbonate, and phosphate donated by ATP, constituting the first step of 2 biosynthetic pathways, one leading to arginine and/or urea and the other to pyrimidine nucleotides. The large subunit (synthetase) binds the substrates ammonia (free or transferred from glutamine from the small subunit), hydrogencarbonate and ATP and carries out an ATP-coupled ligase reaction, activating hydrogencarbonate by forming carboxy phosphate which reacts with ammonia to form carbamoyl phosphate. This Staphylococcus aureus (strain MW2) protein is Carbamoyl phosphate synthase large chain.